We begin with the raw amino-acid sequence, 144 residues long: Maximins 3/H11 type 1 (144 aa).

The signal sequence occupies residues 1–18; sequence MNFKYIVAVSFLIASAYA. 2 consecutive propeptides follow at residues 19–43 and 73–122; these read RSVQ…REIR and RTAE…KKEK. I143 is subject to Isoleucine amide.

This sequence belongs to the bombinin family. As to expression, expressed by the skin glands.

It is found in the secreted. Functionally, maximin-3 shows antibacterial activity against both Gram-positive and Gram-negative bacteria. It also shows antimicrobial activity against the fungus C.albicans, but not against A.flavus nor P.uticale. It has little hemolytic activity. It possess a significant cytotoxicity against tumor cell lines. It possess a significant anti-HIV activity. It shows high spermicidal activity. Maximin-H11 shows antimicrobial activity against bacteria and against the fungus C.albicans. Shows strong hemolytic activity. This chain is Maximins 3/H11 type 1, found in Bombina maxima (Giant fire-bellied toad).